Reading from the N-terminus, the 181-residue chain is Isopentenyl-diphosphate Delta-isomerase (181 aa).

Mn(2+)-binding residues include His-25 and His-32. The 135-residue stretch at 30-164 (PLHLAFSCWL…PWAFSPWMVM (135 aa)) folds into the Nudix hydrolase domain. Residue Cys-67 is part of the active site. Residue Cys-67 participates in Mg(2+) binding. Position 69 (His-69) interacts with Mn(2+). Glu-87 contributes to the Mg(2+) binding site. Glu-114 and Glu-116 together coordinate Mn(2+). Residue Glu-116 is part of the active site.

It belongs to the IPP isomerase type 1 family. Homodimer. It depends on Mg(2+) as a cofactor. The cofactor is Mn(2+).

It localises to the cytoplasm. It catalyses the reaction isopentenyl diphosphate = dimethylallyl diphosphate. It participates in isoprenoid biosynthesis; dimethylallyl diphosphate biosynthesis; dimethylallyl diphosphate from isopentenyl diphosphate: step 1/1. Its function is as follows. Catalyzes the 1,3-allylic rearrangement of the homoallylic substrate isopentenyl (IPP) to its highly electrophilic allylic isomer, dimethylallyl diphosphate (DMAPP). The sequence is that of Isopentenyl-diphosphate Delta-isomerase from Salmonella typhi.